Here is a 485-residue protein sequence, read N- to C-terminus: MNWEIVIGLETHTQLSTDAKIFSGSSTRFGAAPNTQANVIDLALPGSLPVMNRGAAERAIRFGLAVGGKVAPRSVFARKNYFYPDLPKGYQISQYELPVVLGGSLSFFVGEQEKTVNLTRAHLEEDAGKSLHDDFALASGAPASGIDLNRAGTPLLEIVTEPEMRSAAEAVAYARALHSLVVWLGICDGNMQEGSFRCDANVSVRPVGQKEFGTRTEIKNVNSFRFLERAILFEARRQIELIEDGGTVVQETRLYDADRDETRSMRSKEDAHDYRYFPDPDLPPLVISPEWVEEVRANMPELPAALRERFQRDYGLSAYDAAQLSASRGLASYFEDVARALPAGQAKQAANWIMGEVTATLNREEKDIADAPVQAPALAALIGRIIDGTISNKIARDVFSAMWAGEHGGQPDAIIEARGLKQISDTGAIGAMIDEVLAANPAIVAEYRAGKQKAFNSLVGQIMKAAKGKANPQQVNELLKQKLEG.

The protein belongs to the GatB/GatE family. GatB subfamily. As to quaternary structure, heterotrimer of A, B and C subunits.

The catalysed reaction is L-glutamyl-tRNA(Gln) + L-glutamine + ATP + H2O = L-glutaminyl-tRNA(Gln) + L-glutamate + ADP + phosphate + H(+). It carries out the reaction L-aspartyl-tRNA(Asn) + L-glutamine + ATP + H2O = L-asparaginyl-tRNA(Asn) + L-glutamate + ADP + phosphate + 2 H(+). Functionally, allows the formation of correctly charged Asn-tRNA(Asn) or Gln-tRNA(Gln) through the transamidation of misacylated Asp-tRNA(Asn) or Glu-tRNA(Gln) in organisms which lack either or both of asparaginyl-tRNA or glutaminyl-tRNA synthetases. The reaction takes place in the presence of glutamine and ATP through an activated phospho-Asp-tRNA(Asn) or phospho-Glu-tRNA(Gln). The polypeptide is Aspartyl/glutamyl-tRNA(Asn/Gln) amidotransferase subunit B (Bordetella petrii (strain ATCC BAA-461 / DSM 12804 / CCUG 43448)).